Here is an 83-residue protein sequence, read N- to C-terminus: Small ribosomal subunit protein uS17 (83 aa).

The protein belongs to the universal ribosomal protein uS17 family. As to quaternary structure, part of the 30S ribosomal subunit.

Functionally, one of the primary rRNA binding proteins, it binds specifically to the 5'-end of 16S ribosomal RNA. The polypeptide is Small ribosomal subunit protein uS17 (Thermodesulfovibrio yellowstonii (strain ATCC 51303 / DSM 11347 / YP87)).